A 320-amino-acid polypeptide reads, in one-letter code: Aspartate carbamoyltransferase catalytic subunit (320 aa).

2 residues coordinate carbamoyl phosphate: Arg-57 and Thr-58. Residue Lys-85 coordinates L-aspartate. Positions 107, 141, and 144 each coordinate carbamoyl phosphate. Positions 174 and 228 each coordinate L-aspartate. Carbamoyl phosphate-binding residues include Gly-269 and Pro-270.

It belongs to the aspartate/ornithine carbamoyltransferase superfamily. ATCase family. Heterododecamer (2C3:3R2) of six catalytic PyrB chains organized as two trimers (C3), and six regulatory PyrI chains organized as three dimers (R2).

It carries out the reaction carbamoyl phosphate + L-aspartate = N-carbamoyl-L-aspartate + phosphate + H(+). It functions in the pathway pyrimidine metabolism; UMP biosynthesis via de novo pathway; (S)-dihydroorotate from bicarbonate: step 2/3. Functionally, catalyzes the condensation of carbamoyl phosphate and aspartate to form carbamoyl aspartate and inorganic phosphate, the committed step in the de novo pyrimidine nucleotide biosynthesis pathway. The chain is Aspartate carbamoyltransferase catalytic subunit from Mycobacterium marinum (strain ATCC BAA-535 / M).